The chain runs to 168 residues: Ubiquitin-conjugating enzyme E2 2 (168 aa).

The UBC core domain maps to 4 to 150 (PAKRRLMRDF…VRETVENSWN (147 aa)). Cys-88 (glycyl thioester intermediate) is an active-site residue. The tract at residues 143-168 (ETVENSWNEDDEDEDEDEDEDIDDAE) is disordered. The segment covering 149–168 (WNEDDEDEDEDEDEDIDDAE) has biased composition (acidic residues).

This sequence belongs to the ubiquitin-conjugating enzyme family.

It is found in the cytoplasm. Its subcellular location is the nucleus. It catalyses the reaction S-ubiquitinyl-[E1 ubiquitin-activating enzyme]-L-cysteine + [E2 ubiquitin-conjugating enzyme]-L-cysteine = [E1 ubiquitin-activating enzyme]-L-cysteine + S-ubiquitinyl-[E2 ubiquitin-conjugating enzyme]-L-cysteine.. It participates in protein modification; protein ubiquitination. Functionally, catalyzes the covalent attachment of ubiquitin to other proteins. Plays a role in transcription regulation by catalyzing the monoubiquitination of histone H2B to form H2BK123ub1. H2BK123ub1 gives a specific tag for epigenetic transcriptional activation and is also a prerequisite for H3K4me and H3K79me formation. Also involved in postreplication repair of UV-damaged DNA, in N-end rule-dependent protein degradation and in sporulation. In Debaryomyces hansenii (strain ATCC 36239 / CBS 767 / BCRC 21394 / JCM 1990 / NBRC 0083 / IGC 2968) (Yeast), this protein is Ubiquitin-conjugating enzyme E2 2 (UBC2).